Consider the following 271-residue polypeptide: ELH (271 aa).

Residues 1–28 form the signal peptide; that stretch reads MKRPNNRPTNTMSLILCLTLSSLCVSSQ. 2 consecutive propeptides follow at residues 29–95 and 162–184; these read SASV…NEKR and AAGGMEQSEGQNPETESHSRRKR. The segment at 162–190 is disordered; sequence AAGGMEQSEGQNPETESHSRRKRSVLTPS. A Lysine amide modification is found at lysine 241.

Belongs to the molluscan ELH family. Bag cell neurons.

The protein resides in the secreted. Its function is as follows. ELH acts as a neurotransmitter locally, upon neurons of the abdominal ganglion and as a hormone by diffusing into the circulating hemolymph and modulating the activity of other organs. It specifically causes contraction of smooth muscle in the ovotestis and expulsion of the egg string. In terms of biological role, alpha-BCP decreases the activity of a cluster of neurons in the left upper quadrant of the abdominal ganglion. Beta-BCP specifically excites 2 neurons, L1 and R1, in the abdominal ganglion. The protein is ELH of Aplysia californica (California sea hare).